We begin with the raw amino-acid sequence, 90 residues long: Small ribosomal subunit protein uS15c (90 aa).

Belongs to the universal ribosomal protein uS15 family. As to quaternary structure, part of the 30S ribosomal subunit.

Its subcellular location is the plastid. The protein localises to the chloroplast. The chain is Small ribosomal subunit protein uS15c (rps15) from Dioscorea elephantipes (Elephant's foot yam).